We begin with the raw amino-acid sequence, 110 residues long: Large ribosomal subunit protein uL24 (110 aa).

This sequence belongs to the universal ribosomal protein uL24 family. In terms of assembly, part of the 50S ribosomal subunit.

One of two assembly initiator proteins, it binds directly to the 5'-end of the 23S rRNA, where it nucleates assembly of the 50S subunit. In terms of biological role, one of the proteins that surrounds the polypeptide exit tunnel on the outside of the subunit. This is Large ribosomal subunit protein uL24 from Desulfovibrio desulfuricans (strain ATCC 27774 / DSM 6949 / MB).